Here is a 115-residue protein sequence, read N- to C-terminus: Ribonuclease P protein component (115 aa).

The protein belongs to the RnpA family. Consists of a catalytic RNA component (M1 or rnpB) and a protein subunit.

The enzyme catalyses Endonucleolytic cleavage of RNA, removing 5'-extranucleotides from tRNA precursor.. RNaseP catalyzes the removal of the 5'-leader sequence from pre-tRNA to produce the mature 5'-terminus. It can also cleave other RNA substrates such as 4.5S RNA. The protein component plays an auxiliary but essential role in vivo by binding to the 5'-leader sequence and broadening the substrate specificity of the ribozyme. The sequence is that of Ribonuclease P protein component from Bacillus cereus (strain B4264).